A 235-amino-acid polypeptide reads, in one-letter code: Octanoyltransferase (235 aa).

The BPL/LPL catalytic domain occupies 59–235 (PGSSQAVWLL…KKSLTERFGL (177 aa)). Residues 101-108 (RGGEVTHH), 168-170 (SIG), and 181-183 (GLS) each bind substrate. Cysteine 199 serves as the catalytic Acyl-thioester intermediate.

The protein belongs to the LipB family.

It is found in the cytoplasm. The catalysed reaction is octanoyl-[ACP] + L-lysyl-[protein] = N(6)-octanoyl-L-lysyl-[protein] + holo-[ACP] + H(+). The protein operates within protein modification; protein lipoylation via endogenous pathway; protein N(6)-(lipoyl)lysine from octanoyl-[acyl-carrier-protein]: step 1/2. Its function is as follows. Catalyzes the transfer of endogenously produced octanoic acid from octanoyl-acyl-carrier-protein onto the lipoyl domains of lipoate-dependent enzymes. Lipoyl-ACP can also act as a substrate although octanoyl-ACP is likely to be the physiological substrate. In Prochlorococcus marinus (strain MIT 9211), this protein is Octanoyltransferase.